The following is a 456-amino-acid chain: Kynurenine 3-monooxygenase (456 aa).

This sequence belongs to the aromatic-ring hydroxylase family. KMO subfamily. It depends on FAD as a cofactor.

It catalyses the reaction L-kynurenine + NADPH + O2 + H(+) = 3-hydroxy-L-kynurenine + NADP(+) + H2O. The protein operates within cofactor biosynthesis; NAD(+) biosynthesis; quinolinate from L-kynurenine: step 1/3. Functionally, catalyzes the hydroxylation of L-kynurenine (L-Kyn) to form 3-hydroxy-L-kynurenine (L-3OHKyn). Required for synthesis of quinolinic acid. This chain is Kynurenine 3-monooxygenase, found in Xanthomonas campestris pv. campestris (strain B100).